The primary structure comprises 190 residues: MAVFNKLFKRRHSVSEEIKKDDLQEEVEATETEETVEEVIEEIPEKSELELANERADEFENKYLRAHAEMQNIQRRSSEERQQLQRYRSQDLAKAILPSLDNLERALAVEGLTDDVKKGLEMTRDSLIQALKEEGVEEVEVDSFDHNFHMAVQTLPADDEHPADSIAEVFQKGYKLHERLLRPAMVVVYN.

Belongs to the GrpE family. As to quaternary structure, homodimer.

Its subcellular location is the cytoplasm. Its function is as follows. Participates actively in the response to hyperosmotic and heat shock by preventing the aggregation of stress-denatured proteins, in association with DnaK and GrpE. It is the nucleotide exchange factor for DnaK and may function as a thermosensor. Unfolded proteins bind initially to DnaJ; upon interaction with the DnaJ-bound protein, DnaK hydrolyzes its bound ATP, resulting in the formation of a stable complex. GrpE releases ADP from DnaK; ATP binding to DnaK triggers the release of the substrate protein, thus completing the reaction cycle. Several rounds of ATP-dependent interactions between DnaJ, DnaK and GrpE are required for fully efficient folding. In Streptococcus agalactiae serotype III (strain NEM316), this protein is Protein GrpE.